A 129-amino-acid chain; its full sequence is MAKSVRSSKKKVKRVVTDAVAHIYSSFNNTIVTITDRQGNALSWATSGGSGFRGSRKSTPFAAQVAAERAADMALEYGVRNVDVLVKGPGSGRDSAVRALNVKNLKVTSITDVTPLPHNGCRPPKKRRV.

This sequence belongs to the universal ribosomal protein uS11 family. Part of the 30S ribosomal subunit. Interacts with proteins S7 and S18. Binds to IF-3.

Located on the platform of the 30S subunit, it bridges several disparate RNA helices of the 16S rRNA. Forms part of the Shine-Dalgarno cleft in the 70S ribosome. The chain is Small ribosomal subunit protein uS11 from Francisella tularensis subsp. mediasiatica (strain FSC147).